Reading from the N-terminus, the 214-residue chain is Redox-sensing transcriptional repressor Rex (214 aa).

The H-T-H motif DNA-binding region spans 18–57; the sequence is LYYRLVNQLHEKGIDRVNSKTISEALDIDSASIRRDFSYF. 92–97 serves as a coordination point for NAD(+); that stretch reads GVGNLG.

It belongs to the transcriptional regulatory Rex family. In terms of assembly, homodimer.

The protein localises to the cytoplasm. Its function is as follows. Modulates transcription in response to changes in cellular NADH/NAD(+) redox state. The chain is Redox-sensing transcriptional repressor Rex from Staphylococcus carnosus (strain TM300).